Reading from the N-terminus, the 445-residue chain is Tol-Pal system protein TolB (445 aa).

Positions 1-26 are cleaved as a signal peptide; sequence MLNRRNFIRTTSALAASTALPGYAFG.

Belongs to the TolB family. As to quaternary structure, the Tol-Pal system is composed of five core proteins: the inner membrane proteins TolA, TolQ and TolR, the periplasmic protein TolB and the outer membrane protein Pal. They form a network linking the inner and outer membranes and the peptidoglycan layer.

Its subcellular location is the periplasm. Functionally, part of the Tol-Pal system, which plays a role in outer membrane invagination during cell division and is important for maintaining outer membrane integrity. The chain is Tol-Pal system protein TolB from Jannaschia sp. (strain CCS1).